Consider the following 274-residue polypeptide: tRNA pseudouridine synthase A (274 aa).

Catalysis depends on aspartate 51, which acts as the Nucleophile. Position 109 (tyrosine 109) interacts with substrate.

It belongs to the tRNA pseudouridine synthase TruA family. Homodimer.

The catalysed reaction is uridine(38/39/40) in tRNA = pseudouridine(38/39/40) in tRNA. Functionally, formation of pseudouridine at positions 38, 39 and 40 in the anticodon stem and loop of transfer RNAs. The chain is tRNA pseudouridine synthase A from Acidovorax sp. (strain JS42).